The following is a 489-amino-acid chain: Membrane-bound lytic murein transglycosylase F (489 aa).

The N-terminal stretch at 1–32 (MFALTAYRLRCAAWLLATGIFLLLAGCSEAKA) is a signal peptide. Residues 33 to 268 (PTALERVQKE…RLKDRYYGHV (236 aa)) form a non-LT domain region. Residues 269-489 (DVLGYVGAYT…PEEDSGDEKL (221 aa)) are LT domain. Glu315 is an active-site residue. Residues 466 to 489 (AESGLHLPGVNKTRPEEDSGDEKL) form a disordered region. Positions 478–489 (TRPEEDSGDEKL) are enriched in basic and acidic residues.

In the N-terminal section; belongs to the bacterial solute-binding protein 3 family. This sequence in the C-terminal section; belongs to the transglycosylase Slt family.

The protein resides in the cell outer membrane. It catalyses the reaction Exolytic cleavage of the (1-&gt;4)-beta-glycosidic linkage between N-acetylmuramic acid (MurNAc) and N-acetylglucosamine (GlcNAc) residues in peptidoglycan, from either the reducing or the non-reducing ends of the peptidoglycan chains, with concomitant formation of a 1,6-anhydrobond in the MurNAc residue.. Functionally, murein-degrading enzyme that degrades murein glycan strands and insoluble, high-molecular weight murein sacculi, with the concomitant formation of a 1,6-anhydromuramoyl product. Lytic transglycosylases (LTs) play an integral role in the metabolism of the peptidoglycan (PG) sacculus. Their lytic action creates space within the PG sacculus to allow for its expansion as well as for the insertion of various structures such as secretion systems and flagella. The chain is Membrane-bound lytic murein transglycosylase F from Pseudomonas aeruginosa (strain UCBPP-PA14).